Reading from the N-terminus, the 279-residue chain is Alcohol dehydrogenase-related 31 kDa protein (279 aa).

Position 11–34 (11–34) interacts with NAD(+); the sequence is YVADCGGIALETSKVLMTKNIAKL. S139 is a substrate binding site. Y152 serves as the catalytic Proton acceptor.

The protein belongs to the short-chain dehydrogenases/reductases (SDR) family.

The polypeptide is Alcohol dehydrogenase-related 31 kDa protein (Adhr) (Drosophila subobscura (Fruit fly)).